We begin with the raw amino-acid sequence, 319 residues long: NADH-quinone oxidoreductase subunit H 1 (319 aa).

A run of 8 helical transmembrane segments spans residues 8-28, 74-94, 107-127, 147-167, 179-199, 230-250, 258-278, and 297-317; these read LFNI…LIWI, LVFI…FAVI, IGLL…VLGG, LSYE…AGTF, MWFC…GIAE, FFVG…TLFF, LPPL…FILL, and LMLP…LALD.

This sequence belongs to the complex I subunit 1 family. In terms of assembly, NDH-1 is composed of 14 different subunits. Subunits NuoA, H, J, K, L, M, N constitute the membrane sector of the complex.

The protein localises to the cell inner membrane. The enzyme catalyses a quinone + NADH + 5 H(+)(in) = a quinol + NAD(+) + 4 H(+)(out). In terms of biological role, NDH-1 shuttles electrons from NADH, via FMN and iron-sulfur (Fe-S) centers, to quinones in the respiratory chain. The immediate electron acceptor for the enzyme in this species is believed to be ubiquinone. Couples the redox reaction to proton translocation (for every two electrons transferred, four hydrogen ions are translocated across the cytoplasmic membrane), and thus conserves the redox energy in a proton gradient. This subunit may bind ubiquinone. The sequence is that of NADH-quinone oxidoreductase subunit H 1 from Nitrosococcus oceani (strain ATCC 19707 / BCRC 17464 / JCM 30415 / NCIMB 11848 / C-107).